We begin with the raw amino-acid sequence, 306 residues long: Aspartate carbamoyltransferase catalytic subunit (306 aa).

2 residues coordinate carbamoyl phosphate: Arg-51 and Thr-52. Lys-79 contacts L-aspartate. Arg-101, His-129, and Gln-132 together coordinate carbamoyl phosphate. L-aspartate-binding residues include Arg-162 and Arg-213. Ala-254 and Pro-255 together coordinate carbamoyl phosphate.

Belongs to the aspartate/ornithine carbamoyltransferase superfamily. ATCase family. Heterododecamer (2C3:3R2) of six catalytic PyrB chains organized as two trimers (C3), and six regulatory PyrI chains organized as three dimers (R2).

It catalyses the reaction carbamoyl phosphate + L-aspartate = N-carbamoyl-L-aspartate + phosphate + H(+). It participates in pyrimidine metabolism; UMP biosynthesis via de novo pathway; (S)-dihydroorotate from bicarbonate: step 2/3. In terms of biological role, catalyzes the condensation of carbamoyl phosphate and aspartate to form carbamoyl aspartate and inorganic phosphate, the committed step in the de novo pyrimidine nucleotide biosynthesis pathway. In Bacillus thuringiensis (strain Al Hakam), this protein is Aspartate carbamoyltransferase catalytic subunit.